Reading from the N-terminus, the 388-residue chain is Beta-hexosaminidase LpqI (388 aa).

An N-terminal signal peptide occupies residues 1 to 19 (MAFPRTLAILAAAAALVVA). Cys20 carries the N-palmitoyl cysteine lipid modification. A lipid anchor (S-diacylglycerol cysteine) is attached at Cys20. Substrate is bound by residues Asp123, Arg131, Arg193, and 223–224 (KH). The active-site Proton donor/acceptor is the His236. Asp311 acts as the Nucleophile in catalysis.

The protein belongs to the glycosyl hydrolase 3 family.

It localises to the cell inner membrane. The catalysed reaction is Hydrolysis of terminal non-reducing N-acetyl-D-hexosamine residues in N-acetyl-beta-D-hexosaminides.. Its pathway is cell wall biogenesis; peptidoglycan recycling. Its function is as follows. Plays a role in peptidoglycan recycling by cleaving the terminal beta-1,4-linked N-acetylglucosamine (GlcNAc) from peptidoglycan fragments. Acts as a regulator for GlcNAc-MurNAc levels by cleaving disaccharides and allowing the breakdown of MurNAc. In Mycobacterium tuberculosis (strain ATCC 25618 / H37Rv), this protein is Beta-hexosaminidase LpqI.